The primary structure comprises 774 residues: Fatty acid oxidation complex subunit alpha (774 aa).

Disordered regions lie at residues 1 to 31 (MSKE…VGAS) and 617 to 641 (YLYS…RNSF). An enoyl-CoA hydratase region spans residues 1 to 224 (MSKENIVTRE…KMGLVDDVVP (224 aa)). Polar residues-rich tracts occupy residues 8–31 (TREN…VGAS) and 620–637 (SNPT…SPAK). Residues 340–774 (RAIHRVGVLG…NIDEVTDVAS (435 aa)) are 3-hydroxyacyl-CoA dehydrogenase.

In the N-terminal section; belongs to the enoyl-CoA hydratase/isomerase family. The protein in the central section; belongs to the 3-hydroxyacyl-CoA dehydrogenase family. In terms of assembly, heterotetramer of two alpha chains (FadJ) and two beta chains (FadI).

The protein localises to the cytoplasm. The enzyme catalyses a (3S)-3-hydroxyacyl-CoA = a (2E)-enoyl-CoA + H2O. It catalyses the reaction a 4-saturated-(3S)-3-hydroxyacyl-CoA = a (3E)-enoyl-CoA + H2O. It carries out the reaction a (3S)-3-hydroxyacyl-CoA + NAD(+) = a 3-oxoacyl-CoA + NADH + H(+). The catalysed reaction is (3S)-3-hydroxybutanoyl-CoA = (3R)-3-hydroxybutanoyl-CoA. It functions in the pathway lipid metabolism; fatty acid beta-oxidation. Functionally, catalyzes the formation of a hydroxyacyl-CoA by addition of water on enoyl-CoA. Also exhibits 3-hydroxyacyl-CoA epimerase and 3-hydroxyacyl-CoA dehydrogenase activities. The chain is Fatty acid oxidation complex subunit alpha from Yersinia pestis (strain Pestoides F).